Here is a 399-residue protein sequence, read N- to C-terminus: Probable F-box protein At4g22060 (399 aa).

The F-box domain maps to 12-48 (SWSKLPLDLLIMVFERLGFVDFQRTKSVCLAWLYASR).

The sequence is that of Probable F-box protein At4g22060 from Arabidopsis thaliana (Mouse-ear cress).